The following is a 183-amino-acid chain: MFLRPTSIPSAVSQIRAQLFAGPSSLASQIQVRWASKAAGGKSKNGRESAGRRLGVKRYGDQYVTPGTIIVRQRGANFHPGQNVAVGKDFTIYALQPGYVKFYQHHLPYPHLSRPDQPGPQNVPSVKRPRQFRQFVGIARDREDKLPRDERAVGRERRFWGWPKEKVEVVPEAAVESAAGIQA.

Residues 1 to 34 (MFLRPTSIPSAVSQIRAQLFAGPSSLASQIQVRW) constitute a mitochondrion transit peptide.

This sequence belongs to the bacterial ribosomal protein bL27 family.

It localises to the mitochondrion. The sequence is that of Large ribosomal subunit protein bL27m (RPL27) from Cryptococcus neoformans var. neoformans serotype D (strain B-3501A) (Filobasidiella neoformans).